The primary structure comprises 293 residues: tRNA-cytidine(32) 2-sulfurtransferase (293 aa).

The PP-loop motif signature appears at 62–67 (SGGKDS). Residues Cys-137, Cys-140, and Cys-228 each contribute to the [4Fe-4S] cluster site.

Belongs to the TtcA family. As to quaternary structure, homodimer. It depends on Mg(2+) as a cofactor. Requires [4Fe-4S] cluster as cofactor.

Its subcellular location is the cytoplasm. It catalyses the reaction cytidine(32) in tRNA + S-sulfanyl-L-cysteinyl-[cysteine desulfurase] + AH2 + ATP = 2-thiocytidine(32) in tRNA + L-cysteinyl-[cysteine desulfurase] + A + AMP + diphosphate + H(+). Its pathway is tRNA modification. Catalyzes the ATP-dependent 2-thiolation of cytidine in position 32 of tRNA, to form 2-thiocytidine (s(2)C32). The sulfur atoms are provided by the cysteine/cysteine desulfurase (IscS) system. In Brucella abortus (strain S19), this protein is tRNA-cytidine(32) 2-sulfurtransferase.